The following is a 455-amino-acid chain: Phosphoglucosamine mutase (455 aa).

The Phosphoserine intermediate role is filled by Ser104. Ser104, Asp253, Asp255, and Asp257 together coordinate Mg(2+). Phosphoserine is present on Ser104.

It belongs to the phosphohexose mutase family. Mg(2+) serves as cofactor. Activated by phosphorylation.

It carries out the reaction alpha-D-glucosamine 1-phosphate = D-glucosamine 6-phosphate. Its function is as follows. Catalyzes the conversion of glucosamine-6-phosphate to glucosamine-1-phosphate. This is Phosphoglucosamine mutase from Psychrobacter cryohalolentis (strain ATCC BAA-1226 / DSM 17306 / VKM B-2378 / K5).